A 621-amino-acid chain; its full sequence is Chaperone protein HscA homolog (621 aa).

This sequence belongs to the heat shock protein 70 family.

Functionally, chaperone involved in the maturation of iron-sulfur cluster-containing proteins. Has a low intrinsic ATPase activity which is markedly stimulated by HscB. The polypeptide is Chaperone protein HscA homolog (Azotobacter vinelandii (strain DJ / ATCC BAA-1303)).